A 634-amino-acid polypeptide reads, in one-letter code: Chaperone protein HtpG (634 aa).

The segment at 1–344 is a; substrate-binding; sequence MNETVANNKE…SNDLPLNVSR (344 aa). Positions 345–561 are b; sequence EILQDNKVTQ…DFEMGTQMAK (217 aa). The c stretch occupies residues 562–634; that stretch reads LLAAAGQAVP…TAINSLLTKG (73 aa).

Belongs to the heat shock protein 90 family. In terms of assembly, homodimer.

It localises to the cytoplasm. Functionally, molecular chaperone. Has ATPase activity. The protein is Chaperone protein HtpG of Vibrio vulnificus (strain CMCP6).